Here is a 394-residue protein sequence, read N- to C-terminus: Endothelial cell-selective adhesion molecule (394 aa).

An N-terminal signal peptide occupies residues 1 to 29 (MILPARTPETSLLRVLFLGLSTLAAFSLA). Over 30 to 251 (QMELHVPPGL…LDVMTGSKAA (222 aa)) the chain is Extracellular. The Ig-like V-type domain maps to 37–146 (PGLNKLEAVE…DGKNIGHSIK (110 aa)). N-linked (GlcNAc...) asparagine glycosylation is found at asparagine 111, asparagine 172, asparagine 216, and asparagine 239. The Ig-like C2-type domain occupies 156–243 (PAPPSCSFQG…GFAQCNVTLD (88 aa)). A disulfide bond links cysteine 177 and cysteine 227. A helical membrane pass occupies residues 252–272 (VVAGAVVGTFVGLVLIAGLVL). Topologically, residues 273–394 (LYQRRSKTLE…PAQSQAGSLV (122 aa)) are cytoplasmic. The tract at residues 300-372 (WTKGSDTISK…SLTPGGVSSS (73 aa)) is disordered. Polar residues-rich tracts occupy residues 303-318 (GSDT…SVTS) and 335-347 (FTPT…QALS). Phosphoserine is present on serine 304. Phosphothreonine occurs at positions 336 and 338. 3 positions are modified to phosphoserine: serine 340, serine 343, and serine 348.

Interacts with MAGI1.

Its subcellular location is the cell junction. The protein resides in the adherens junction. It localises to the tight junction. It is found in the cell membrane. Its function is as follows. Can mediate aggregation most likely through a homophilic molecular interaction. The chain is Endothelial cell-selective adhesion molecule (Esam) from Rattus norvegicus (Rat).